Consider the following 369-residue polypeptide: IST1-like protein (369 aa).

Residues 12 to 59 (KLKVQLKLAVSRIQILKNKKANIVRDEKRNVAELLRKKNEESARIRVE) are a coiled coil. The tract at residues 224–354 (QIIQQQQQPQ…SSDTGYPDYD (131 aa)) is disordered. Composition is skewed to low complexity over residues 225-239 (IIQQ…SFPI) and 246-270 (PTFS…SPQF). Residues 277–305 (FYNNNSGNQTPQFPTISTNNSDGYSNDKF) show a composition bias toward polar residues. Residues 306 to 337 (NNGNNNYNNNNNNNNNNNNNNNHNNNNNNNNN) show a composition bias toward low complexity.

The protein belongs to the IST1 family.

This is IST1-like protein from Dictyostelium discoideum (Social amoeba).